Reading from the N-terminus, the 1273-residue chain is ABC transporter B family member 2 (1273 aa).

An N-terminal signal peptide occupies residues 1-30; the sequence is MYISLIFFLSNHFPPLISIPIFIFLSFSSP. The next 7 helical transmembrane spans lie at 66 to 86, 91 to 111, 126 to 146, 209 to 229, 230 to 250, 305 to 325, and 345 to 365; these read FSFADFYDCVLMTLGSVGACI, VPIFFIFFGKLINIIGLAYLF, FVYLSVAILFSSWLEVACWMH, FIAGFAIGFTSVWQISLVTLS, IVPLIALAGGIYAFVAIGLIA, GLGLGSMHCVLFLSWALLVWF, and LNVVIAGLSLGQAAPDISAFV. The region spanning 77–366 is the ABC transmembrane type-1 1 domain; that stretch reads MTLGSVGACI…AAPDISAFVR (290 aa). Positions 401 to 637 constitute an ABC transporter 1 domain; that stretch reads IQFKDATFSY…PDGAYSSLLR (237 aa). Residue 436-443 coordinates ATP; that stretch reads GGSGSGKS. 2 N-linked (GlcNAc...) asparagine glycosylation sites follow: N466 and N651. Residues 710 to 997 form the ABC transmembrane type-1 2 domain; that stretch reads GVCGTICAFI…TLALAPDLLK (288 aa). A run of 2 helical transmembrane segments spans residues 711–731 and 752–772; these read VCGTICAFIAGSQMPLFALGV and IAILFCCASVITLIVYTIEHI. N-linked (GlcNAc...) asparagine glycosylation is present at N806. 3 helical membrane-spanning segments follow: residues 832–852, 934–954, and 975–995; these read ILLQNLGLVVTSFIIAFILNW, IAGLFYGVSQFFIFSSYGLAL, and FMVLIVTALAMGETLALAPDL. In terms of domain architecture, ABC transporter 2 spans 1030–1266; the sequence is IELKGVHFSY…KSGPYFKLIS (237 aa). Residue 1065 to 1072 participates in ATP binding; it reads GQSGSGKS. N-linked (GlcNAc...) asparagine glycosylation is found at N1217 and N1256.

It belongs to the ABC transporter superfamily. ABCB family. Multidrug resistance exporter (TC 3.A.1.201) subfamily. As to quaternary structure, interacts with 1-naphthylphthalamic acid (NPA).

It localises to the membrane. This chain is ABC transporter B family member 2 (ABCB2), found in Arabidopsis thaliana (Mouse-ear cress).